A 252-amino-acid polypeptide reads, in one-letter code: Trans-aconitate 2-methyltransferase (252 aa).

This sequence belongs to the methyltransferase superfamily. Tam family.

Its subcellular location is the cytoplasm. It carries out the reaction trans-aconitate + S-adenosyl-L-methionine = (E)-3-(methoxycarbonyl)pent-2-enedioate + S-adenosyl-L-homocysteine. In terms of biological role, catalyzes the S-adenosylmethionine monomethyl esterification of trans-aconitate. The polypeptide is Trans-aconitate 2-methyltransferase (Escherichia coli (strain SE11)).